A 463-amino-acid chain; its full sequence is Bifunctional protein HldE (463 aa).

The ribokinase stretch occupies residues 1–315 (MKKILVIGDL…LILNQTHPKI (315 aa)). An ATP-binding site is contributed by 191–194 (NRAE). Asp260 is an active-site residue. The tract at residues 334–463 (FTNGCFDLLH…IEKIKRTHND (130 aa)) is cytidylyltransferase.

In the N-terminal section; belongs to the carbohydrate kinase PfkB family. The protein in the C-terminal section; belongs to the cytidylyltransferase family. As to quaternary structure, homodimer.

It carries out the reaction D-glycero-beta-D-manno-heptose 7-phosphate + ATP = D-glycero-beta-D-manno-heptose 1,7-bisphosphate + ADP + H(+). It catalyses the reaction D-glycero-beta-D-manno-heptose 1-phosphate + ATP + H(+) = ADP-D-glycero-beta-D-manno-heptose + diphosphate. It participates in nucleotide-sugar biosynthesis; ADP-L-glycero-beta-D-manno-heptose biosynthesis; ADP-L-glycero-beta-D-manno-heptose from D-glycero-beta-D-manno-heptose 7-phosphate: step 1/4. Its pathway is nucleotide-sugar biosynthesis; ADP-L-glycero-beta-D-manno-heptose biosynthesis; ADP-L-glycero-beta-D-manno-heptose from D-glycero-beta-D-manno-heptose 7-phosphate: step 3/4. In terms of biological role, catalyzes the phosphorylation of D-glycero-D-manno-heptose 7-phosphate at the C-1 position to selectively form D-glycero-beta-D-manno-heptose-1,7-bisphosphate. Its function is as follows. Catalyzes the ADP transfer from ATP to D-glycero-beta-D-manno-heptose 1-phosphate, yielding ADP-D-glycero-beta-D-manno-heptose. This is Bifunctional protein HldE from Helicobacter pylori (strain HPAG1).